The sequence spans 85 residues: Toxin Cll6 (85 aa).

Residues M1–T19 form the signal peptide. Positions K20 to S83 constitute an LCN-type CS-alpha/beta domain. 4 disulfides stabilise this stretch: C31–C82, C35–C58, C44–C63, and C48–C65. S83 is subject to Serine amide.

The protein belongs to the long (4 C-C) scorpion toxin superfamily. Sodium channel inhibitor family. Beta subfamily. Expressed by the venom gland.

It is found in the secreted. Beta toxins bind voltage-independently at site-4 of sodium channels (Nav) and shift the voltage of activation toward more negative potentials thereby affecting sodium channel activation and promoting spontaneous and repetitive firing. This chain is Toxin Cll6, found in Centruroides limpidus (Mexican scorpion).